The following is a 75-amino-acid chain: Large ribosomal subunit protein bL31 (75 aa).

Zn(2+) contacts are provided by Cys16, Cys18, Cys37, and Cys40.

This sequence belongs to the bacterial ribosomal protein bL31 family. Type A subfamily. As to quaternary structure, part of the 50S ribosomal subunit. Requires Zn(2+) as cofactor.

Functionally, binds the 23S rRNA. This chain is Large ribosomal subunit protein bL31, found in Baumannia cicadellinicola subsp. Homalodisca coagulata.